Consider the following 237-residue polypeptide: Ribose-5-phosphate isomerase A (237 aa).

Substrate-binding positions include 30–33 (SGST), 87–90 (DGAD), and 100–103 (KGGG). Catalysis depends on glutamate 109, which acts as the Proton acceptor. Lysine 127 provides a ligand contact to substrate.

Belongs to the ribose 5-phosphate isomerase family. Homodimer.

It catalyses the reaction aldehydo-D-ribose 5-phosphate = D-ribulose 5-phosphate. The protein operates within carbohydrate degradation; pentose phosphate pathway; D-ribose 5-phosphate from D-ribulose 5-phosphate (non-oxidative stage): step 1/1. Functionally, catalyzes the reversible conversion of ribose-5-phosphate to ribulose 5-phosphate. The sequence is that of Ribose-5-phosphate isomerase A from Prochlorococcus marinus (strain MIT 9211).